We begin with the raw amino-acid sequence, 427 residues long: tRNA(Ile)-lysidine synthase (427 aa).

An ATP-binding site is contributed by 25–30; it reads SGGLDS.

Belongs to the tRNA(Ile)-lysidine synthase family.

The protein resides in the cytoplasm. The enzyme catalyses cytidine(34) in tRNA(Ile2) + L-lysine + ATP = lysidine(34) in tRNA(Ile2) + AMP + diphosphate + H(+). Functionally, ligates lysine onto the cytidine present at position 34 of the AUA codon-specific tRNA(Ile) that contains the anticodon CAU, in an ATP-dependent manner. Cytidine is converted to lysidine, thus changing the amino acid specificity of the tRNA from methionine to isoleucine. This chain is tRNA(Ile)-lysidine synthase, found in Histophilus somni (strain 129Pt) (Haemophilus somnus).